The chain runs to 249 residues: UPF0524 protein C3orf70 homolog B (249 aa).

The interval 174 to 230 (GPKMGHCSSPSTSEDSGINALGGHFLESCEEESEEEDELSTDGHSSPGSLWDQDECT) is disordered. A compositionally biased stretch (acidic residues) spans 201-213 (SCEEESEEEDELS).

Belongs to the UPF0524 family.

Functionally, plays a role in neuronal and neurobehavioral development. Required for normal expression of the postmitotic and mature neuron markers elavl3 and eno2 and neurobehaviors related to circadian rhythm and altered light-dark conditions. The protein is UPF0524 protein C3orf70 homolog B of Danio rerio (Zebrafish).